Consider the following 759-residue polypeptide: Protein AKNAD1 (759 aa).

Residues 169–246 (TDQLNPKKDG…HTEKASSGNR (78 aa)) are disordered. A compositionally biased stretch (polar residues) spans 181-192 (SNKPGSPTMTEE). Positions 371–482 (QKISQGKQMC…EDVKDKVDES (112 aa)) form a coiled coil. The segment covering 484-496 (YTSAPSLPVSSPV) has biased composition (polar residues). 4 disordered regions span residues 484-543 (YTSA…QEAP), 634-654 (EKAP…FCSD), 678-723 (CRKE…PSLA), and 735-759 (PDTS…MKSQ). A compositionally biased stretch (low complexity) spans 497–509 (TLDDLASTSSSLS). Residues 639-654 (SDSTPNSDTGHSFCSD) are compositionally biased toward polar residues. Residues 679–688 (RKEPPKEFHY) show a composition bias toward basic and acidic residues. Over residues 735 to 744 (PDTSKSSPTP) the composition is skewed to polar residues.

Belongs to the AKNA family.

The protein is Protein AKNAD1 (AKNAD1) of Macaca fascicularis (Crab-eating macaque).